The primary structure comprises 401 residues: CLIP domain-containing serine protease B9 (401 aa).

Residues 1 to 26 (MTSYNRSVAWLTVCVLLALHIGGSHQ) form the signal peptide. Residues 30–85 (QCTTPTRLRGRCISIYECDSILDYFKQRILTWEEREFLRKSQCTGATSGRQPFVCC) form the Clip domain. Disulfide bonds link cysteine 31/cysteine 84, cysteine 41/cysteine 72, and cysteine 47/cysteine 85. A glycan (N-linked (GlcNAc...) asparagine) is linked at asparagine 88. Residues 148 to 400 (IYGGQNADID…YMAWVRSNIK (253 aa)) form the Peptidase S1 domain. Cysteines 178 and 194 form a disulfide. Active-site charge relay system residues include histidine 193 and aspartate 257. Disulfide bonds link cysteine 322–cysteine 339 and cysteine 349–cysteine 376. Asparagine 330 carries an N-linked (GlcNAc...) asparagine glycan. Serine 353 functions as the Charge relay system in the catalytic mechanism.

The protein belongs to the peptidase S1 family. CLIP subfamily. Forms a covalent heterodimer with SRPN2; the interaction inhibits CLIPB9 protease activity. In terms of processing, proteolytic cleavage is necessary for activation.

The protein localises to the secreted. With respect to regulation, inhibited by serpin SRPN2. Serine protease that functions in the melanization-mediated immune response. Cleaves and activates prophenoloxidase (PPO), which is required for the activation of the prophenoloxidase cascade probably following the recognition of pathogen-derived products. In Anopheles gambiae (African malaria mosquito), this protein is CLIP domain-containing serine protease B9.